Reading from the N-terminus, the 266-residue chain is GTP cyclohydrolase FolE2 (266 aa).

This sequence belongs to the GTP cyclohydrolase IV family.

The catalysed reaction is GTP + H2O = 7,8-dihydroneopterin 3'-triphosphate + formate + H(+). It participates in cofactor biosynthesis; 7,8-dihydroneopterin triphosphate biosynthesis; 7,8-dihydroneopterin triphosphate from GTP: step 1/1. Functionally, converts GTP to 7,8-dihydroneopterin triphosphate. This Methylobacillus flagellatus (strain ATCC 51484 / DSM 6875 / VKM B-1610 / KT) protein is GTP cyclohydrolase FolE2.